Here is a 187-residue protein sequence, read N- to C-terminus: Ribonuclease HII (187 aa).

An RNase H type-2 domain is found at Met-1–Leu-187. Asp-6, Glu-7, and Asp-98 together coordinate a divalent metal cation.

This sequence belongs to the RNase HII family. Mn(2+) serves as cofactor. It depends on Mg(2+) as a cofactor.

It is found in the cytoplasm. It carries out the reaction Endonucleolytic cleavage to 5'-phosphomonoester.. Functionally, endonuclease that specifically degrades the RNA of RNA-DNA hybrids. The chain is Ribonuclease HII from Idiomarina loihiensis (strain ATCC BAA-735 / DSM 15497 / L2-TR).